The following is a 348-amino-acid chain: NADH-ubiquinone oxidoreductase chain 2 (348 aa).

11 consecutive transmembrane segments (helical) span residues 1 to 21, 23 to 43, 56 to 76, 92 to 112, 123 to 143, 148 to 168, 176 to 196, 198 to 218, 242 to 262, 272 to 292, and 321 to 341; these read MMTL…MFSS, WFFA…MMLF, YFIS…WNYF, ITLI…HFWL, MGLI…IQVS, NMYI…FGGL, LLAY…AVSA, LSWV…TILI, CILV…FLKL, SLIL…FFYL, and LLFN…PFMI.

The protein belongs to the complex I subunit 2 family.

The protein localises to the mitochondrion inner membrane. The enzyme catalyses a ubiquinone + NADH + 5 H(+)(in) = a ubiquinol + NAD(+) + 4 H(+)(out). In terms of biological role, core subunit of the mitochondrial membrane respiratory chain NADH dehydrogenase (Complex I) that is believed to belong to the minimal assembly required for catalysis. Complex I functions in the transfer of electrons from NADH to the respiratory chain. The immediate electron acceptor for the enzyme is believed to be ubiquinone. The protein is NADH-ubiquinone oxidoreductase chain 2 (MT-ND2) of Myxine glutinosa (Atlantic hagfish).